A 407-amino-acid chain; its full sequence is Argininosuccinate synthase (407 aa).

ATP-binding positions include 12–20 (AYSGGLDTS) and alanine 39. L-citrulline-binding residues include tyrosine 92 and serine 97. An ATP-binding site is contributed by glycine 122. 3 residues coordinate L-aspartate: threonine 124, asparagine 128, and aspartate 129. Residue asparagine 128 participates in L-citrulline binding. Positions 132, 183, 192, 268, and 280 each coordinate L-citrulline.

Belongs to the argininosuccinate synthase family. Type 1 subfamily. As to quaternary structure, homotetramer.

The protein localises to the cytoplasm. It carries out the reaction L-citrulline + L-aspartate + ATP = 2-(N(omega)-L-arginino)succinate + AMP + diphosphate + H(+). It functions in the pathway amino-acid biosynthesis; L-arginine biosynthesis; L-arginine from L-ornithine and carbamoyl phosphate: step 2/3. This is Argininosuccinate synthase from Caulobacter sp. (strain K31).